We begin with the raw amino-acid sequence, 102 residues long: MQFLAVAALLFTTALAAPSSDVNGIIRRANAFCPEGLLYTNPLCCDLDVLGVADVDCVVPPAKPSSCKSFGSVCASIGRKPRCCAVPVAGVALLCTDPIPAI.

The signal sequence occupies residues 1–16; the sequence is MQFLAVAALLFTTALA. Intrachain disulfides connect Cys-33–Cys-83, Cys-44–Cys-74, Cys-45–Cys-57, and Cys-84–Cys-95.

This sequence belongs to the cerato-ulmin hydrophobin family. As to quaternary structure, homotetramer. Further self-assembles to form highly ordered films at water-air interfaces through intermolecular interactions. Expressed in the conidia, vegetative growth and induction growth stages.

Its subcellular location is the secreted. The protein localises to the cell wall. It localises to the cytoplasm. Its function is as follows. Aerial growth, conidiation, and dispersal of filamentous fungi in the environment rely upon a capability of their secreting small amphipathic proteins called hydrophobins (HPBs) with low sequence identity. Class I can self-assemble into an outermost layer of rodlet bundles on aerial cell surfaces, conferring cellular hydrophobicity that supports fungal growth, development and dispersal; whereas Class II form highly ordered films at water-air interfaces through intermolecular interactions but contribute nothing to the rodlet structure. Hbf3 is a class II hydrophobin that has a role in vegetative growth and asexual development. The sequence is that of Class II hydrophobin 3 from Hypocrea jecorina (strain QM6a) (Trichoderma reesei).